The chain runs to 127 residues: Glycine cleavage system H protein (127 aa).

One can recognise a Lipoyl-binding domain in the interval 24 to 105 (TLTVGVTDHA…AYAAWLFKLK (82 aa)). Lys-65 bears the N6-lipoyllysine mark.

This sequence belongs to the GcvH family. The glycine cleavage system is composed of four proteins: P, T, L and H. (R)-lipoate serves as cofactor.

Functionally, the glycine cleavage system catalyzes the degradation of glycine. The H protein shuttles the methylamine group of glycine from the P protein to the T protein. The protein is Glycine cleavage system H protein of Azoarcus sp. (strain BH72).